We begin with the raw amino-acid sequence, 404 residues long: Glucose-1-phosphate adenylyltransferase (404 aa).

Alpha-D-glucose 1-phosphate is bound by residues Tyr99, Gly164, 179-180 (EK), and Ser197.

This sequence belongs to the bacterial/plant glucose-1-phosphate adenylyltransferase family. In terms of assembly, homotetramer.

It catalyses the reaction alpha-D-glucose 1-phosphate + ATP + H(+) = ADP-alpha-D-glucose + diphosphate. It participates in glycan biosynthesis; glycogen biosynthesis. Involved in the biosynthesis of ADP-glucose, a building block required for the elongation reactions to produce glycogen. Catalyzes the reaction between ATP and alpha-D-glucose 1-phosphate (G1P) to produce pyrophosphate and ADP-Glc. This Rhodococcus jostii (strain RHA1) protein is Glucose-1-phosphate adenylyltransferase.